The following is a 440-amino-acid chain: Adenylosuccinate synthetase (440 aa).

Residues Gly-14–Lys-20 and Gly-42–Thr-44 contribute to the GTP site. The active-site Proton acceptor is Asp-15. Mg(2+) is bound by residues Asp-15 and Gly-42. Residues Asp-15–Lys-18, Asn-40–His-43, Thr-131, Arg-145, Gln-226, Thr-241, and Arg-313 contribute to the IMP site. Residue His-43 is the Proton donor of the active site. Substrate is bound at residue Ala-309–Arg-315. GTP is bound by residues Arg-315, Lys-341 to Asp-343, and Ser-423 to Gly-425.

The protein belongs to the adenylosuccinate synthetase family. In terms of assembly, homodimer. Requires Mg(2+) as cofactor.

The protein resides in the cytoplasm. It catalyses the reaction IMP + L-aspartate + GTP = N(6)-(1,2-dicarboxyethyl)-AMP + GDP + phosphate + 2 H(+). Its pathway is purine metabolism; AMP biosynthesis via de novo pathway; AMP from IMP: step 1/2. Functionally, plays an important role in the de novo pathway of purine nucleotide biosynthesis. Catalyzes the first committed step in the biosynthesis of AMP from IMP. This Hydrogenovibrio crunogenus (strain DSM 25203 / XCL-2) (Thiomicrospira crunogena) protein is Adenylosuccinate synthetase.